Here is a 38-residue protein sequence, read N- to C-terminus: uncharacterized protein (38 aa).

This is an uncharacterized protein from Archaeoglobus fulgidus (strain ATCC 49558 / DSM 4304 / JCM 9628 / NBRC 100126 / VC-16).